The chain runs to 241 residues: Endonuclease NucS (241 aa).

The protein belongs to the NucS endonuclease family.

The protein localises to the cytoplasm. In terms of biological role, cleaves both 3' and 5' ssDNA extremities of branched DNA structures. This chain is Endonuclease NucS, found in Corynebacterium jeikeium (strain K411).